Reading from the N-terminus, the 136-residue chain is Holo-[acyl-carrier-protein] synthase (136 aa).

Mg(2+) is bound by residues aspartate 7 and glutamate 53.

This sequence belongs to the P-Pant transferase superfamily. AcpS family. It depends on Mg(2+) as a cofactor.

It is found in the cytoplasm. It catalyses the reaction apo-[ACP] + CoA = holo-[ACP] + adenosine 3',5'-bisphosphate + H(+). Its function is as follows. Transfers the 4'-phosphopantetheine moiety from coenzyme A to a Ser of acyl-carrier-protein. This is Holo-[acyl-carrier-protein] synthase from Roseiflexus castenholzii (strain DSM 13941 / HLO8).